Consider the following 227-residue polypeptide: ATP-dependent Clp protease proteolytic subunit 1 (227 aa).

Ser-124 acts as the Nucleophile in catalysis. His-149 is a catalytic residue.

The protein belongs to the peptidase S14 family. As to quaternary structure, fourteen ClpP subunits assemble into 2 heptameric rings which stack back to back to give a disk-like structure with a central cavity, resembling the structure of eukaryotic proteasomes.

The protein localises to the cytoplasm. It carries out the reaction Hydrolysis of proteins to small peptides in the presence of ATP and magnesium. alpha-casein is the usual test substrate. In the absence of ATP, only oligopeptides shorter than five residues are hydrolyzed (such as succinyl-Leu-Tyr-|-NHMec, and Leu-Tyr-Leu-|-Tyr-Trp, in which cleavage of the -Tyr-|-Leu- and -Tyr-|-Trp bonds also occurs).. Its function is as follows. Cleaves peptides in various proteins in a process that requires ATP hydrolysis. Has a chymotrypsin-like activity. Plays a major role in the degradation of misfolded proteins. The chain is ATP-dependent Clp protease proteolytic subunit 1 from Rhodopirellula baltica (strain DSM 10527 / NCIMB 13988 / SH1).